Here is a 186-residue protein sequence, read N- to C-terminus: ADP-ribosylation factor-like protein DDB_G0292332 (186 aa).

Residues 24-31 (GVENVGKT), 78-82 (DIGGK), and 138-141 (NKQD) each bind GTP.

This sequence belongs to the small GTPase superfamily. Arf family.

In terms of biological role, binds and exchanges GTP and GDP. This Dictyostelium discoideum (Social amoeba) protein is ADP-ribosylation factor-like protein DDB_G0292332.